The sequence spans 676 residues: RNA helicase NPH-II (676 aa).

Residues 172-347 (FLAWISHRPV…IFLPNPAFIH (176 aa)) enclose the Helicase ATP-binding domain. ATP is bound at residue 185-192 (GGTGVGKT). A DEXH box motif is present at residues 296–299 (DEVH). A Helicase C-terminal domain is found at 366-535 (NPSSRMAYIE…NYILYANKFN (170 aa)).

It belongs to the DEAD box helicase family. DEAH subfamily. In terms of assembly, monomer.

The protein resides in the virion. It catalyses the reaction ATP + H2O = ADP + phosphate + H(+). NTP-dependent helicase that catalyzes unidirectional unwinding of 3'tailed duplex RNAs and plays an important role during transcription of early mRNAs, presumably by preventing R-loop formation behind the elongating RNA polymerase. Might also play a role in the export of newly synthesized mRNA chains out of the core into the cytoplasm. Required for replication and propagation of viral particles. This is RNA helicase NPH-II (OPG084) from Monkeypox virus.